Here is a 250-residue protein sequence, read N- to C-terminus: Cell division protein ZapD (250 aa).

It belongs to the ZapD family. In terms of assembly, interacts with FtsZ.

It localises to the cytoplasm. Cell division factor that enhances FtsZ-ring assembly. Directly interacts with FtsZ and promotes bundling of FtsZ protofilaments, with a reduction in FtsZ GTPase activity. This chain is Cell division protein ZapD, found in Photorhabdus laumondii subsp. laumondii (strain DSM 15139 / CIP 105565 / TT01) (Photorhabdus luminescens subsp. laumondii).